Consider the following 559-residue polypeptide: CCR4-NOT transcription complex subunit 6-like (559 aa).

Positions 1–148 (MPKEKYDPPD…LYQEPDGTRK (148 aa)) are required for interaction with cnot1, cnot3 and cnot7. Positions 1–550 (MPKEKYDPPD…NGLHLPVHST (550 aa)) are nuclease domain. 4 LRR repeats span residues 52–73 (HLTA…IAKL), 75–96 (HLVY…LGNM), 98–120 (TLRE…GRLF), and 121–143 (QLQT…YQEP). Residue glutamate 235 participates in Mg(2+) binding. The substrate site is built by glutamate 235, glutamate 271, histidine 353, and proline 358. Position 405 (aspartate 405) interacts with Mg(2+). The active-site Proton donor/acceptor is aspartate 405. Asparagine 407, asparagine 474, and phenylalanine 479 together coordinate substrate.

This sequence belongs to the CCR4/nocturin family. In terms of assembly, component of the CCR4-NOT complex. Mg(2+) serves as cofactor.

It is found in the cytoplasm. Its subcellular location is the nucleus. The catalysed reaction is Exonucleolytic cleavage of poly(A) to 5'-AMP.. Poly(A) nuclease with 3'-5' RNase activity. Catalytic component of the CCR4-NOT complex which is one of the major cellular mRNA deadenylases and is linked to various cellular processes including bulk mRNA degradation, miRNA-mediated repression, translational repression during translational initiation and general transcription regulation. Additional complex functions may be a consequence of its influence on mRNA expression. The sequence is that of CCR4-NOT transcription complex subunit 6-like (cnot6l) from Danio rerio (Zebrafish).